We begin with the raw amino-acid sequence, 43 residues long: Ferritin light chain (43 aa).

One can recognise a Ferritin-like diiron domain in the interval 1 to 43 (MEAALLVEKNLNQALLDLHGLASARGDPHICDFLENHFLDEEV).

Belongs to the ferritin family. In terms of assembly, oligomer of 24 subunits. There are two types of subunits: L (light) chain and H (heavy) chain. The major chain can be light or heavy, depending on the species and tissue type. The functional molecule forms a roughly spherical shell with a diameter of 12 nm and contains a central cavity into which the insoluble mineral iron core is deposited. Interacts with NCOA4.

It localises to the cytoplasmic vesicle. Its subcellular location is the autophagosome. The protein localises to the cytoplasm. It is found in the autolysosome. Its function is as follows. Stores iron in a soluble, non-toxic, readily available form. Important for iron homeostasis. Iron is taken up in the ferrous form and deposited as ferric hydroxides after oxidation. Also plays a role in delivery of iron to cells. Mediates iron uptake in capsule cells of the developing kidney. Delivery to lysosomes by the cargo receptor NCOA4 for autophagic degradation and release or iron. This Ovis aries (Sheep) protein is Ferritin light chain (FTL).